The primary structure comprises 863 residues: MICAL-like protein 1 (863 aa).

The 107-residue stretch at 2 to 108 folds into the Calponin-homology (CH) domain; it reads AGPRGALLAW…YVSQYYNHFC (107 aa). Disordered regions lie at residues 119-162 and 224-670; these read RKGL…TPSS and GTRS…PLIK. Residues 125-135 are compositionally biased toward pro residues; the sequence is CSPPSVAPTPV. Low complexity-rich tracts occupy residues 143–159 and 224–244; these read GEEL…TGQT and GTRS…HQQQ. The LIM zinc-binding domain occupies 162–225; sequence STCAACQQHV…EHCARLGPGT (64 aa). A phosphoserine mark is found at Ser295 and Ser309. Position 318 is a phosphothreonine (Thr318). Over residues 325–340 the composition is skewed to polar residues; the sequence is LQQENLVEQAGSSSLV. Over residues 384–395 the composition is skewed to pro residues; it reads APLPPSSSPGPP. A Phosphoserine modification is found at Ser391. Positions 425–427 match the NPF1 motif; it reads NPF. Positions 427 to 438 are enriched in acidic residues; the sequence is FEEEEEDKEEEA. Over residues 439-450 the composition is skewed to low complexity; the sequence is PAAPSLATSPAL. Thr467 and Thr469 each carry phosphothreonine. 4 positions are modified to phosphoserine: Ser470, Ser471, Ser484, and Ser486. Composition is skewed to low complexity over residues 482–495, 505–520, and 553–566; these read APSA…ASRL, PSPA…ESAS, and SLST…SGEL. Ser578 and Ser621 each carry phosphoserine. Residues 633 to 635 carry the NPF2 motif; it reads NPF. Positions 638-656 are enriched in low complexity; that stretch reads KPSPAASPATKKATKGSKP. A mediates the interaction with RAB13 and RAB35 and intramolecular interaction with the CH domain region spans residues 652-863; the sequence is KGSKPVRPPA…AKSKSPRDKS (212 aa). A bMERB domain is found at 671–818; the sequence is RKVQADQYIP…EEEEDKMLEA (148 aa). The stretch at 682–711 forms a coiled coil; that stretch reads EDIHGEMDTIERRLDALEHRGVLLEEKLRG. The necessary and sufficient to associate with tubular recycling endosome membranes, mediate phosphatidic acid-binding and membrane tubulation stretch occupies residues 700 to 863; that stretch reads HRGVLLEEKL…AKSKSPRDKS (164 aa). Ser740 is modified (phosphoserine). A coiled-coil region spans residues 785-830; sequence MQELVTLIEQRNAIINCLDEDRQREEEEDKMLEAMIKKKEFQREAE.

Homooligomer. Interacts (via NPF1 motif) with EHD1 (via EH domain); the interaction is direct and probably recruits EHD1 to membranes. Interacts with EHD3 (via EH domain). Interacts with RAB35 (GTP-bound form); the interaction is direct and probably recruits MICALL1 to membranes. Interacts with ACAP2; the interaction is indirect through RAB35. Interacts with RAB8A (GTP-bound form); regulates RAB8A association with recycling endosomes. Interacts with RAB13 (GTP-bound form). Interacts with ARF6 (GTP-bound form). Interacts with PACSIN2 (via the SH3 domain). Interacts with DPYSL2.

The protein localises to the recycling endosome membrane. It is found in the late endosome membrane. Its subcellular location is the cell projection. The protein resides in the cilium membrane. It localises to the cytoplasm. The protein localises to the cytoskeleton. It is found in the microtubule organizing center. Its subcellular location is the centrosome. The protein resides in the centriole. Lipid-binding protein with higher affinity for phosphatidic acid, a lipid enriched in recycling endosome membranes. On endosome membranes, acts as a downstream effector of Rab proteins recruiting cytosolic proteins to regulate membrane tubulation. Involved in a late step of receptor-mediated endocytosis regulating for instance endocytosed-EGF receptor trafficking. Alternatively, regulates slow endocytic recycling of endocytosed proteins back to the plasma membrane. Also involved in cargo protein delivery to the plasma membrane. Plays a role in ciliogenesis coordination, recruits EHD1 to primary cilium where it is anchored to the centriole through interaction with tubulins. May indirectly play a role in neurite outgrowth. This chain is MICAL-like protein 1 (MICALL1), found in Homo sapiens (Human).